The following is a 213-amino-acid chain: Orotate phosphoribosyltransferase (213 aa).

Lysine 26 contributes to the 5-phospho-alpha-D-ribose 1-diphosphate binding site. Orotate is bound at residue 34-35; it reads FF. Residues 72–73, arginine 99, lysine 100, lysine 103, histidine 105, and 124–132 contribute to the 5-phospho-alpha-D-ribose 1-diphosphate site; these read YK and DDVITAGTA. 2 residues coordinate orotate: threonine 128 and arginine 156.

This sequence belongs to the purine/pyrimidine phosphoribosyltransferase family. PyrE subfamily. In terms of assembly, homodimer. The cofactor is Mg(2+).

The enzyme catalyses orotidine 5'-phosphate + diphosphate = orotate + 5-phospho-alpha-D-ribose 1-diphosphate. It functions in the pathway pyrimidine metabolism; UMP biosynthesis via de novo pathway; UMP from orotate: step 1/2. Its function is as follows. Catalyzes the transfer of a ribosyl phosphate group from 5-phosphoribose 1-diphosphate to orotate, leading to the formation of orotidine monophosphate (OMP). The sequence is that of Orotate phosphoribosyltransferase from Escherichia coli O45:K1 (strain S88 / ExPEC).